The following is a 97-amino-acid chain: Co-chaperonin GroES (97 aa).

It belongs to the GroES chaperonin family. In terms of assembly, heptamer of 7 subunits arranged in a ring. Interacts with the chaperonin GroEL.

The protein localises to the cytoplasm. Its function is as follows. Together with the chaperonin GroEL, plays an essential role in assisting protein folding. The GroEL-GroES system forms a nano-cage that allows encapsulation of the non-native substrate proteins and provides a physical environment optimized to promote and accelerate protein folding. GroES binds to the apical surface of the GroEL ring, thereby capping the opening of the GroEL channel. The sequence is that of Co-chaperonin GroES from Pseudomonas putida (Arthrobacter siderocapsulatus).